The sequence spans 44 residues: Photosystem I reaction center subunit IX (44 aa).

A helical membrane pass occupies residues 7 to 27; that stretch reads YLSVAPVLSTLWFGSLAGLLI.

Belongs to the PsaJ family.

Its subcellular location is the plastid. The protein localises to the chloroplast thylakoid membrane. May help in the organization of the PsaE and PsaF subunits. In Arabis hirsuta (Hairy rock-cress), this protein is Photosystem I reaction center subunit IX.